A 717-amino-acid chain; its full sequence is Glycine--tRNA ligase beta subunit (717 aa).

Belongs to the class-II aminoacyl-tRNA synthetase family. In terms of assembly, tetramer of two alpha and two beta subunits.

The protein resides in the cytoplasm. It carries out the reaction tRNA(Gly) + glycine + ATP = glycyl-tRNA(Gly) + AMP + diphosphate. This Agrobacterium fabrum (strain C58 / ATCC 33970) (Agrobacterium tumefaciens (strain C58)) protein is Glycine--tRNA ligase beta subunit.